A 498-amino-acid chain; its full sequence is ATP synthase subunit beta, chloroplastic (498 aa).

ATP is bound at residue 172-179; it reads GGAGVGKT.

It belongs to the ATPase alpha/beta chains family. In terms of assembly, F-type ATPases have 2 components, CF(1) - the catalytic core - and CF(0) - the membrane proton channel. CF(1) has five subunits: alpha(3), beta(3), gamma(1), delta(1), epsilon(1). CF(0) has four main subunits: a(1), b(1), b'(1) and c(9-12).

The protein resides in the plastid. It is found in the chloroplast thylakoid membrane. It carries out the reaction ATP + H2O + 4 H(+)(in) = ADP + phosphate + 5 H(+)(out). Produces ATP from ADP in the presence of a proton gradient across the membrane. The catalytic sites are hosted primarily by the beta subunits. The chain is ATP synthase subunit beta, chloroplastic from Montinia caryophyllacea (Wild clove bush).